Reading from the N-terminus, the 611-residue chain is MTVKLKKPKKYAVAKNATLLAAFGLIGSLSLAKANDELIKLEKEPGQWVMQNKNYANTRYSELNQINTKNVSRLRLAWSFSTGALRGHEGGPLVVGTTMYVHSAYPNHVYALDLTQKPYAIKWQYTPVQNSQAVAVACCDVVNRGLAYANGKIFMTTLDGQIIALDANTGKELWKMKHADVTKGETITGAPLVVKDKVLVGVSGGEFGVRGRVGAYDINTGNRVWLAYSQGPDEEVLLDSDFNKEFPQHGGPGDGTKTWPGEQWKLGGGTTWGWYSYDPALDLFYYGTSNPGTWNAEQRKGGDNKWSCTIFARRPDTGKARWAYQMTPWDSWDYDGVNEMILPDLTVKGKKTPCLVHFDRNGFGYVLDRRTGQLIEAQPFVYVNWAKEISKENDRPVEIPEKRTKQGVDTKGICPNSMGGKDQQPAAFSPQTGLFYVPTNNMCMNYEGVEATYTAGAPYVGANVLMYSGHEGKDDYYGAFICYDALKGKRVWEIHEHFPVWSGPVVTAGGLAFYGTMDGWFKAVDIKTGKVLWQQKLGSGIIGNPITFLGPDKKQYVAVYSGVGGWFGIAVAQNLPPDDPYAGLGAVGVAYQAGLPKATTVGGELYVFALE.

Residues 1-34 (MTVKLKKPKKYAVAKNATLLAAFGLIGSLSLAKA) form the signal peptide. An intrachain disulfide couples C138 to C139. Residues R144, T188, S203, G204, and G205 each contribute to the pyrroloquinoline quinone site. E206 is a Ce(3+) binding site. E206 is a binding site for Eu(3+). T270 and W272 together coordinate pyrroloquinoline quinone. Residues N290, D333, and D335 each contribute to the Ce(3+) site. N290, D333, and D335 together coordinate Eu(3+). R360 provides a ligand contact to pyrroloquinoline quinone. A disulfide bridge links C414 with C443. Pyrroloquinoline quinone contacts are provided by W501 and W566.

It belongs to the bacterial PQQ dehydrogenase family. As to quaternary structure, homodimer. Requires Ce(3+) as cofactor. La(3+) serves as cofactor. It depends on Nd(3+) as a cofactor. Pr(3+) is required as a cofactor. The cofactor is Eu(3+). Requires pyrroloquinoline quinone as cofactor.

Its subcellular location is the periplasm. The catalysed reaction is 2 Fe(III)-[cytochrome cL] + methanol = 2 Fe(II)-[cytochrome cL] + formaldehyde + 2 H(+). It catalyses the reaction 4 Fe(III)-[cytochrome cL] + methanol + H2O = 4 Fe(II)-[cytochrome cL] + formate + 5 H(+). It carries out the reaction 2 Fe(III)-[cytochrome cL] + a primary alcohol = 2 Fe(II)-[cytochrome cL] + an aldehyde + 2 H(+). It participates in one-carbon metabolism; methanol degradation. Functionally, catalyzes the oxidation of methanol to formaldehyde or formate in the presence of lanthanides (Ln). Is a key enzyme in methane/methanol metabolism, allowing M.fumariolicum to grow on methane as the sole carbon and energy source. Can also act on other primary alcohols in vitro, such as ethanol, 1-propanol, 1-butanol, and 1-hexanol, but is not able to oxidize secondary alcohols and acetaldehyde. Uses a specific cytochrome cL, encoded by the adjacent gene in the locus, as electron acceptor. This is Lanthanide-dependent methanol dehydrogenase from Methylacidiphilum fumariolicum (strain SolV).